The primary structure comprises 129 residues: Small ribosomal subunit protein uS11 (129 aa).

It belongs to the universal ribosomal protein uS11 family. As to quaternary structure, part of the 30S ribosomal subunit.

Located on the platform of the 30S subunit. This is Small ribosomal subunit protein uS11 from Haloarcula marismortui (strain ATCC 43049 / DSM 3752 / JCM 8966 / VKM B-1809) (Halobacterium marismortui).